A 339-amino-acid chain; its full sequence is Ribonucleoside-diphosphate reductase subunit beta (339 aa).

Positions 87 and 121 each coordinate Fe cation. Residue Y125 is part of the active site. H215 serves as a coordination point for Fe cation.

It belongs to the ribonucleoside diphosphate reductase small chain family. Tetramer of two alpha and two beta subunits. Fe cation serves as cofactor.

The catalysed reaction is a 2'-deoxyribonucleoside 5'-diphosphate + [thioredoxin]-disulfide + H2O = a ribonucleoside 5'-diphosphate + [thioredoxin]-dithiol. Functionally, provides the precursors necessary for DNA synthesis. Catalyzes the biosynthesis of deoxyribonucleotides from the corresponding ribonucleotides. This is Ribonucleoside-diphosphate reductase subunit beta (nrdF) from Mycoplasmoides gallisepticum (strain R(low / passage 15 / clone 2)) (Mycoplasma gallisepticum).